Consider the following 129-residue polypeptide: HTH-type transcriptional regulator DdrOP3 (129 aa).

The 55-residue stretch at 7–61 (LRELRQERGLRLKDIAGAAQISVPYLSDLERGRTNPSLETLQSLASTYGITVHDL) folds into the HTH cro/C1-type domain. The segment at residues 18 to 37 (LKDIAGAAQISVPYLSDLER) is a DNA-binding region (H-T-H motif).

Cleaved between Leu-106 and Arg-107 by the IrrE metalloprotease after exposure to radiation. Cleavage inactivates DdrOP3, leading to derepression of the target genes.

Functionally, repressor specific for genes preceded by a radiation/desiccation response motif (RDRM) site, which is present upstream of several radiation-induced genes. This Deinococcus deserti (strain DSM 17065 / CIP 109153 / LMG 22923 / VCD115) protein is HTH-type transcriptional regulator DdrOP3.